The chain runs to 190 residues: RNA pyrophosphohydrolase (190 aa).

In terms of domain architecture, Nudix hydrolase spans 6–149 (GYRPNVGIIL…KRDVYTQALN (144 aa)). The short motif at 38–59 (GGIKYGESPVQAMYRELHEEVG) is the Nudix box element. Positions 167-190 (QRVHGPRSTDNPSSETDGHAHIAG) are disordered.

This sequence belongs to the Nudix hydrolase family. RppH subfamily. It depends on a divalent metal cation as a cofactor.

In terms of biological role, accelerates the degradation of transcripts by removing pyrophosphate from the 5'-end of triphosphorylated RNA, leading to a more labile monophosphorylated state that can stimulate subsequent ribonuclease cleavage. The chain is RNA pyrophosphohydrolase from Bordetella parapertussis (strain 12822 / ATCC BAA-587 / NCTC 13253).